A 160-amino-acid chain; its full sequence is MTKEVIVESFELDHTIVKAPYVRLISEEFGPKGDRITNFDVRLVQPNQNSIETAGLHTIEHLLAKLIRQRIDGMIDCSPFGCRTGFHLIMWGKHSSTDIAKVIKSSLEEIATGITWEDVPGTTIESCGNYKDHSLFAAKEWAQLIIDQGISDDPFSRHVI.

Fe cation is bound by residues His57, His61, and Cys127.

This sequence belongs to the LuxS family. Homodimer. Fe cation serves as cofactor.

The catalysed reaction is S-(5-deoxy-D-ribos-5-yl)-L-homocysteine = (S)-4,5-dihydroxypentane-2,3-dione + L-homocysteine. In terms of biological role, involved in the synthesis of autoinducer 2 (AI-2) which is secreted by bacteria and is used to communicate both the cell density and the metabolic potential of the environment. The regulation of gene expression in response to changes in cell density is called quorum sensing. Catalyzes the transformation of S-ribosylhomocysteine (RHC) to homocysteine (HC) and 4,5-dihydroxy-2,3-pentadione (DPD). In Streptococcus pyogenes serotype M2 (strain MGAS10270), this protein is S-ribosylhomocysteine lyase.